Reading from the N-terminus, the 866-residue chain is Probable outer membrane usher protein ElfC (866 aa).

Residues 1–35 (MYRTHRQHSLLSSGGVPSFIGGLVVFVSAAFNAQA) form the signal peptide.

The protein belongs to the fimbrial export usher family.

The protein resides in the cell outer membrane. Functionally, part of the elfADCG fimbrial operon, which could be required for adherence to host epithelial cells. Could be involved in the export and assembly of the ElfA fimbrial subunits across the outer membrane. The sequence is that of Probable outer membrane usher protein ElfC (elfC) from Escherichia coli O157:H7.